Reading from the N-terminus, the 444-residue chain is Argininosuccinate synthase (444 aa).

Residues 18-26 (AFSGGLDTS) and alanine 44 contribute to the ATP site. Tyrosine 100 lines the L-citrulline pocket. Residues glycine 130 and threonine 132 each contribute to the ATP site. 3 residues coordinate L-aspartate: threonine 132, asparagine 136, and aspartate 137. Asparagine 136 provides a ligand contact to L-citrulline. Aspartate 137 contributes to the ATP binding site. Positions 140 and 193 each coordinate L-citrulline. Residue aspartate 195 participates in ATP binding. Residues threonine 202, glutamate 204, and glutamate 281 each contribute to the L-citrulline site.

The protein belongs to the argininosuccinate synthase family. Type 2 subfamily. In terms of assembly, homotetramer.

It is found in the cytoplasm. The catalysed reaction is L-citrulline + L-aspartate + ATP = 2-(N(omega)-L-arginino)succinate + AMP + diphosphate + H(+). Its pathway is amino-acid biosynthesis; L-arginine biosynthesis; L-arginine from L-ornithine and carbamoyl phosphate: step 2/3. This Haemophilus influenzae (strain PittEE) protein is Argininosuccinate synthase.